The sequence spans 60 residues: Pepsin-3 (60 aa).

A propeptide spans 1-35 (activation peptide); the sequence is INVPLTRHKSMRESLREKGIELPYQDPAIKYRPEF.

Belongs to the peptidase A1 family.

This Thunnus orientalis (North Pacific bluefin tuna) protein is Pepsin-3.